Consider the following 148-residue polypeptide: Large-conductance mechanosensitive channel (148 aa).

A run of 2 helical transmembrane segments spans residues 12-32 and 85-105; these read AFAM…GGAF and GQFL…FLFI.

It belongs to the MscL family. Homopentamer.

It is found in the cell inner membrane. Functionally, channel that opens in response to stretch forces in the membrane lipid bilayer. May participate in the regulation of osmotic pressure changes within the cell. This is Large-conductance mechanosensitive channel from Bacteroides thetaiotaomicron (strain ATCC 29148 / DSM 2079 / JCM 5827 / CCUG 10774 / NCTC 10582 / VPI-5482 / E50).